We begin with the raw amino-acid sequence, 224 residues long: Adenosylcobinamide-GDP ribazoletransferase (224 aa).

The next 4 helical transmembrane spans lie at leucine 21–proline 41, leucine 44–leucine 64, glycine 97–leucine 117, and tryptophan 156–valine 176.

It belongs to the CobS family. It depends on Mg(2+) as a cofactor.

Its subcellular location is the cell membrane. The enzyme catalyses alpha-ribazole + adenosylcob(III)inamide-GDP = adenosylcob(III)alamin + GMP + H(+). It catalyses the reaction alpha-ribazole 5'-phosphate + adenosylcob(III)inamide-GDP = adenosylcob(III)alamin 5'-phosphate + GMP + H(+). It participates in cofactor biosynthesis; adenosylcobalamin biosynthesis; adenosylcobalamin from cob(II)yrinate a,c-diamide: step 7/7. Its function is as follows. Joins adenosylcobinamide-GDP and alpha-ribazole to generate adenosylcobalamin (Ado-cobalamin). Also synthesizes adenosylcobalamin 5'-phosphate from adenosylcobinamide-GDP and alpha-ribazole 5'-phosphate. This is Adenosylcobinamide-GDP ribazoletransferase from Pyrobaculum aerophilum (strain ATCC 51768 / DSM 7523 / JCM 9630 / CIP 104966 / NBRC 100827 / IM2).